The chain runs to 194 residues: Translation machinery-associated protein 22 (194 aa).

Residues 102-173 form the SUI1 domain; it reads VQIKRVERNK…DVQDWLLEVY (72 aa).

Belongs to the DENR family. As to quaternary structure, interacts with the 40S ribosomal subunit.

The protein resides in the cytoplasm. The polypeptide is Translation machinery-associated protein 22 (tma22) (Aspergillus oryzae (strain ATCC 42149 / RIB 40) (Yellow koji mold)).